A 341-amino-acid chain; its full sequence is Phosphate acyltransferase (341 aa).

It belongs to the PlsX family. Homodimer. Probably interacts with PlsY.

The protein resides in the cytoplasm. The enzyme catalyses a fatty acyl-[ACP] + phosphate = an acyl phosphate + holo-[ACP]. It functions in the pathway lipid metabolism; phospholipid metabolism. Catalyzes the reversible formation of acyl-phosphate (acyl-PO(4)) from acyl-[acyl-carrier-protein] (acyl-ACP). This enzyme utilizes acyl-ACP as fatty acyl donor, but not acyl-CoA. The chain is Phosphate acyltransferase from Vibrio campbellii (strain ATCC BAA-1116).